A 373-amino-acid chain; its full sequence is RNA 3'-terminal phosphate cyclase-like protein (373 aa).

Belongs to the RNA 3'-terminal cyclase family. Type 2 subfamily. Part of the small subunit (SSU) processome, composed of more than 70 proteins and the RNA chaperone small nucleolar RNA (snoRNA) U3. Interacts with BMS1.

It is found in the nucleus. It localises to the nucleolus. As part of the small subunit (SSU) processome, it plays a role in 40S-ribosomal-subunit biogenesis in the early pre-rRNA processing steps at sites A0, A1 and A2 that are required for proper maturation of the 18S RNA. Activates BMS1 by promoting GDP/GTP exchange. Does not have cyclase activity. The protein is RNA 3'-terminal phosphate cyclase-like protein (RCL1) of Bos taurus (Bovine).